The chain runs to 348 residues: Protein lifeguard 1 (348 aa).

The disordered stretch occupies residues 1–118; that stretch reads MSHEKSFLVS…GNYQEEGPPS (118 aa). The span at 14-41 shows a compositional bias: pro residues; sequence YPPPNPGYPVGPQAPMPPYVQPPYPGAP. The segment covering 42–57 has biased composition (low complexity); that stretch reads YPQAAFQPSPYGQPGY. Positions 82-101 are enriched in pro residues; the sequence is GPYPQSPFPPNPYGQPPPFQ. 7 helical membrane-spanning segments follow: residues 142-162, 174-194, 205-225, 230-250, 260-280, 284-304, and 323-343; these read VFLV…IFTF, VWTY…LSCC, LVAL…IASF, AVIM…IFSM, MGVL…CIFI, ILEI…LAVD, and FAAL…LTII.

It belongs to the BI1 family. LFG subfamily.

It localises to the membrane. Its function is as follows. Potential apoptotic regulator. This is Protein lifeguard 1 (Grina) from Rattus norvegicus (Rat).